We begin with the raw amino-acid sequence, 321 residues long: Homoserine O-succinyltransferase (321 aa).

C142 functions as the Acyl-thioester intermediate in the catalytic mechanism. 2 residues coordinate substrate: K163 and S192. The active-site Proton acceptor is the H235. Residue E237 is part of the active site. R249 contacts substrate.

Belongs to the MetA family.

The protein resides in the cytoplasm. The catalysed reaction is L-homoserine + succinyl-CoA = O-succinyl-L-homoserine + CoA. It participates in amino-acid biosynthesis; L-methionine biosynthesis via de novo pathway; O-succinyl-L-homoserine from L-homoserine: step 1/1. Its function is as follows. Transfers a succinyl group from succinyl-CoA to L-homoserine, forming succinyl-L-homoserine. This chain is Homoserine O-succinyltransferase, found in Shewanella loihica (strain ATCC BAA-1088 / PV-4).